A 78-amino-acid chain; its full sequence is Serine rich endogenous peptide 12 (78 aa).

A signal peptide spans 1 to 24; the sequence is MRNTISSKMGQVLIVLLLLCTVLC. The propeptide at 25-43 is removed in mature form; the sequence is RTESALPSGQHSVLLTGRR. The tract at residues 47–78 is disordered; the sequence is SGASGPVRSSQSSQAGGRFNDADPIAIDYGKY. The short motif at 50–64 is the SCOOP motif element; that stretch reads SGPVRSSQSSQAGGR. The short motif at 56–58 is the SxS motif essential for MIK2 binding element; it reads SQS.

This sequence belongs to the serine rich endogenous peptide (SCOOP) phytocytokine family. As to quaternary structure, interacts with MIK2 (via extracellular leucine-rich repeat domain); this interaction triggers the formation of complex between MIK2 and the BAK1/SERK3 and SERK4 coreceptors, and subsequent BAK1 activation by phosphorylation on 'Ser-612'. Mostly expressed in the whole root system, and, to a lower extent, in seedlings shoots.

It is found in the cell membrane. Its subcellular location is the secreted. The protein localises to the extracellular space. It localises to the apoplast. Its function is as follows. Brassicaceae-specific phytocytokine (plant endogenous peptide released into the apoplast) perceived by MIK2 in a BAK1/SERK3 and SERK4 coreceptors-dependent manner, that modulates various physiological and antimicrobial processes including root growth prevention, phospholipid signaling pathway activation (e.g. accumulation of phosphatidic acid (PA), but transient reduction of phosphatidylinositol 4,5-bisphosphate (PIP(2)) levels) and reactive oxygen species (ROS) response regulation. Moderates primary root growth, and regulates root meristems and cell elongation; this root growth regulation is associated with the modulation of ROS metabolism and alteration of cell wall structure, and depends on variations in many genes expression. Promotes ROS (e.g. superoxide anion O(2) and hydrogen peroxide H(2)O(2)) production and MAPK (e.g. MPK3, MPK4 and MPK6) activation in a MIK2-dependent manner, thus leading to the up-regulation of immune-related marker genes (e.g. WRKY30, WRKY33 and CYP81F2). Involved in biotic and oxidative stress responses; acts as a negative regulator of defense against necrotrophic pathogens such as the bacteria Erwinia amylovora and the fungus Alternaria brassicicola. Able to prime defense responses against the pathogenic bacteria Pseudomonas syringae pv. tomato DC3000. Contributes to the triggering of defense responses toward generalist herbivores such as Spodoptera littoralis, probably via the activation of jasmonate and indole glucosinolate biosynthesis. Triggers the expression of several PROSCOOP genes (e.g. PROSCOOP3, PROSCOOP7, PROSCOOP12 and PROSCOOP13). In Arabidopsis thaliana (Mouse-ear cress), this protein is Serine rich endogenous peptide 12.